The sequence spans 878 residues: MEVKGPSGRSFCCESEGQFKSCLKRHTPSLLLPSSWKGNSGSCLMAEALHRTSPTPNSCPLPLPLCRMSGVLCSRNLFTFKFSLFQLDSGASGEPGHSLGLTLGFSYCGNCQTAVVSAQPEGMASNGAYPVLGPGVTANPGTSLSVFTALPFTTPAPGPAHGPLLVTAGAPPGGPLVLSTFPSTPLVTEQDGCSPSGAGASNVFVQMRTEVGPVKAAQAQTLVLTQAPLVWQAPGALCGGVVCPPPLLLAAAPVVPVMAAQVVGGTQACEGGWSQGLPLPPPPPPAAQLPPIVSQGNAGPWPQGAHGESSLASSQAKAPPDDSCNPRSVYENFRLWQHYKPLARRHLPQSPDTEALSCFLIPVLRSLARRKPTMTLEEGLWRAMREWQHTSNFDRMIFYEMAEKFLEFEAEEEMQIQKSQWMKGPQCLPPPATPRLEPRGPPAPEVVKQPVYLPSKAGPKAQTACLPPPRPQRPVTKARRPPPQPHRRAETKARLPPPRPQRPAETKVPEEIPPEVVQEYVDIMEELLGPSLGATGEPEKQREEGKVKQPQEEDWTPPDPGLLSYIDKLCSQKDFVTKVEAVIHPQFLEELLSPDPQMDFLALSQDLEQEEGLTLAQLVEKRLPPLKEKQHSRAAPSRGTARLDSSSSKFAAGQGAERDVPDPQEGVGMETCPPQTTARDSQGRGRAHTGMARSEDSVVLLGCQDSPGLRAARPTSPPQDHRPTCPGVGTKDALDLPGGSPVRESHGLAQGSSEEEELPSLAFLLGSQHKLLPWWLPQSPVPASGLLSPEKWGPQGTHQSPSAERRGLNLAPSPANKAKKQPLFGSLSPAEKTPHRGPGLRVSGEQSLTWGLGGPSQSQKRKGDPLVSRKEKKQHCSQ.

5 disordered regions span residues 273-324, 417-511, 527-560, 622-757, and 775-878; these read WSQG…DDSC, QKSQ…VPEE, LLGP…PPDP, RLPP…EEEE, and WLPQ…HCSQ. 2 stretches are compositionally biased toward pro residues: residues 278–288 and 427–444; these read PLPPPPPPAAQ and CLPP…PPAP. Composition is skewed to basic and acidic residues over residues 537 to 551 and 622 to 631; these read EPEK…KQPQ and RLPPLKEKQH.

The protein belongs to the NUT family.

The sequence is that of NUT family member 2E (NUTM2E) from Homo sapiens (Human).